Consider the following 102-residue polypeptide: Monothiol glutaredoxin-S1 (102 aa).

Residues 1-101 (MEKISNLLED…SLLRRAGAIW (101 aa)) enclose the Glutaredoxin domain. Cys21 is a [2Fe-2S] cluster binding site.

Belongs to the glutaredoxin family. CC-type subfamily.

The protein localises to the cytoplasm. In terms of biological role, may only reduce GSH-thiol disulfides, but not protein disulfides. The polypeptide is Monothiol glutaredoxin-S1 (GRXS1) (Arabidopsis thaliana (Mouse-ear cress)).